The primary structure comprises 486 residues: MNASDFRRRGKEMVDYMADYLEGIEGRQVYPDVQPGYLRPLIPATAPQEPDTFEDILQDVEKIIMPGVTHWHSPYFFAYFPTASSYPAMLADMLCGAIGCIGFSWAASPACTELETVMMDWLGKMLQLPEAFLAGEAGEGGGVIQGSASEATLVALLAARTKVVRRLQAASPGLTQGAVLEKLVAYASDQAHSSVERAGLIGGVKLKAIPSDGKFAMRASALQEALERDKAAGLIPFFVVATLGTTSCCSFDNLLEVGPICHEEDIWLHVDAAYAGSAFICPEFRHLLNGVEFADSFNFNPHKWLLVNFDCSAMWVKRRTDLTGAFKLDPVYLKHSHQGSGLITDYRHWQLPLGRRFRSLKMWFVFRMYGVKGLQAYIRKHVQLSHEFEAFVLQDPRFEVCAEVTLGLVCFRLKGSDGLNEALLERINSARKIHLVPCRLRGQFVLRFAICSRKVESGHVRLAWEHIRGLAAELLAAEEGKAEIKS.

Position 1 is an N-acetylmethionine (M1). 2 consecutive repeat copies span residues 58–115 (QDVE…TELE) and 118–178 (MMDW…TQGA). The interval 58-178 (QDVEKIIMPG…AASPGLTQGA (121 aa)) is 2 X approximate tandem repeats. Substrate is bound at residue T82. Pyridoxal 5'-phosphate contacts are provided by A148 and S149. H192 lines the substrate pocket. The pyridoxal 5'-phosphate site is built by T246 and N300. K303 bears the N6-(pyridoxal phosphate)lysine mark.

This sequence belongs to the group II decarboxylase family. In terms of assembly, homodimer. Requires pyridoxal 5'-phosphate as cofactor.

It catalyses the reaction L-dopa + H(+) = dopamine + CO2. It carries out the reaction 5-hydroxy-L-tryptophan + H(+) = serotonin + CO2. It functions in the pathway catecholamine biosynthesis; dopamine biosynthesis; dopamine from L-tyrosine: step 2/2. Catalyzes the decarboxylation of L-3,4-dihydroxyphenylalanine (DOPA) to dopamine and L-5-hydroxytryptophan to serotonin. The protein is Aromatic-L-amino-acid decarboxylase (DDC) of Sus scrofa (Pig).